The chain runs to 376 residues: Quinolinate synthase (376 aa).

Residues His-57 and Ser-78 each coordinate iminosuccinate. Cys-123 provides a ligand contact to [4Fe-4S] cluster. Iminosuccinate contacts are provided by residues 149–151 (YAN) and Ser-166. Cys-210 lines the [4Fe-4S] cluster pocket. Iminosuccinate contacts are provided by residues 236–238 (HPE) and Thr-253. Cys-307 serves as a coordination point for [4Fe-4S] cluster.

The protein belongs to the quinolinate synthase family. Type 1 subfamily. It depends on [4Fe-4S] cluster as a cofactor.

It is found in the cytoplasm. The enzyme catalyses iminosuccinate + dihydroxyacetone phosphate = quinolinate + phosphate + 2 H2O + H(+). It participates in cofactor biosynthesis; NAD(+) biosynthesis; quinolinate from iminoaspartate: step 1/1. Functionally, catalyzes the condensation of iminoaspartate with dihydroxyacetone phosphate to form quinolinate. The sequence is that of Quinolinate synthase from Paraburkholderia phymatum (strain DSM 17167 / CIP 108236 / LMG 21445 / STM815) (Burkholderia phymatum).